The following is a 170-amino-acid chain: Adenine phosphoribosyltransferase (170 aa).

Belongs to the purine/pyrimidine phosphoribosyltransferase family. Homodimer.

It localises to the cytoplasm. It catalyses the reaction AMP + diphosphate = 5-phospho-alpha-D-ribose 1-diphosphate + adenine. It functions in the pathway purine metabolism; AMP biosynthesis via salvage pathway; AMP from adenine: step 1/1. Catalyzes a salvage reaction resulting in the formation of AMP, that is energically less costly than de novo synthesis. This chain is Adenine phosphoribosyltransferase, found in Fusobacterium nucleatum subsp. nucleatum (strain ATCC 25586 / DSM 15643 / BCRC 10681 / CIP 101130 / JCM 8532 / KCTC 2640 / LMG 13131 / VPI 4355).